The primary structure comprises 250 residues: Triosephosphate isomerase (250 aa).

Substrate is bound at residue 9–11 (NWK). His95 acts as the Electrophile in catalysis. Glu167 acts as the Proton acceptor in catalysis. Substrate contacts are provided by residues Gly173, Ser213, and 234–235 (GG).

This sequence belongs to the triosephosphate isomerase family. In terms of assembly, homodimer.

It localises to the cytoplasm. The enzyme catalyses D-glyceraldehyde 3-phosphate = dihydroxyacetone phosphate. Its pathway is carbohydrate biosynthesis; gluconeogenesis. The protein operates within carbohydrate degradation; glycolysis; D-glyceraldehyde 3-phosphate from glycerone phosphate: step 1/1. Involved in the gluconeogenesis. Catalyzes stereospecifically the conversion of dihydroxyacetone phosphate (DHAP) to D-glyceraldehyde-3-phosphate (G3P). The chain is Triosephosphate isomerase from Flavobacterium johnsoniae (strain ATCC 17061 / DSM 2064 / JCM 8514 / BCRC 14874 / CCUG 350202 / NBRC 14942 / NCIMB 11054 / UW101) (Cytophaga johnsonae).